A 640-amino-acid polypeptide reads, in one-letter code: Probable potassium transport system protein Kup 3 (640 aa).

Positions 1–15 (MTVDAAATPAEAPAT) are enriched in low complexity. The tract at residues 1 to 20 (MTVDAAATPAEAPATNGHGD) is disordered. 12 consecutive transmembrane segments (helical) span residues 30–50 (LTLG…LYAL), 71–91 (VISL…VVIL), 117–137 (ASII…DAVI), 155–175 (AAFD…LFAV), 183–203 (VAAF…IAAF), 224–244 (FMLH…LAVT), 265–285 (WLFV…ALII), 294–314 (PFFL…ATVA), 363–383 (LLLA…ALAS), 385–405 (YGIS…VVIW), 410–430 (WSPL…LTFL), and 437–457 (VLEG…LMYT).

Belongs to the HAK/KUP transporter (TC 2.A.72) family.

It localises to the cell inner membrane. The catalysed reaction is K(+)(in) + H(+)(in) = K(+)(out) + H(+)(out). Transport of potassium into the cell. Likely operates as a K(+):H(+) symporter. This Bradyrhizobium sp. (strain BTAi1 / ATCC BAA-1182) protein is Probable potassium transport system protein Kup 3.